The following is a 275-amino-acid chain: Nitrogenase iron protein 2 (275 aa).

Residue 9–16 (GKGGIGKS) coordinates ATP. Cys-97 is a [4Fe-4S] cluster binding site. The residue at position 100 (Arg-100) is an ADP-ribosylarginine; by dinitrogenase reductase ADP-ribosyltransferase. Cys-132 serves as a coordination point for [4Fe-4S] cluster.

Belongs to the NifH/BchL/ChlL family. In terms of assembly, homodimer. It depends on [4Fe-4S] cluster as a cofactor. The reversible ADP-ribosylation of Arg-100 inactivates the nitrogenase reductase and regulates nitrogenase activity.

The enzyme catalyses N2 + 8 reduced [2Fe-2S]-[ferredoxin] + 16 ATP + 16 H2O = H2 + 8 oxidized [2Fe-2S]-[ferredoxin] + 2 NH4(+) + 16 ADP + 16 phosphate + 6 H(+). Its function is as follows. The key enzymatic reactions in nitrogen fixation are catalyzed by the nitrogenase complex, which has 2 components: the iron protein (component 2) and a component 1 which is either a molybdenum-iron protein, a vanadium-iron, or an iron-iron protein. The sequence is that of Nitrogenase iron protein 2 (anfH) from Rhodobacter capsulatus (Rhodopseudomonas capsulata).